Reading from the N-terminus, the 305-residue chain is Ribonuclease Z (305 aa).

Zn(2+) is bound by residues His61, His63, Asp65, His66, His138, Asp208, and His266. Catalysis depends on Asp65, which acts as the Proton acceptor.

Belongs to the RNase Z family. As to quaternary structure, homodimer. Requires Zn(2+) as cofactor.

The catalysed reaction is Endonucleolytic cleavage of RNA, removing extra 3' nucleotides from tRNA precursor, generating 3' termini of tRNAs. A 3'-hydroxy group is left at the tRNA terminus and a 5'-phosphoryl group is left at the trailer molecule.. Functionally, zinc phosphodiesterase, which displays some tRNA 3'-processing endonuclease activity. Probably involved in tRNA maturation, by removing a 3'-trailer from precursor tRNA. The chain is Ribonuclease Z from Methanosarcina acetivorans (strain ATCC 35395 / DSM 2834 / JCM 12185 / C2A).